The primary structure comprises 157 residues: ATP synthase subunit b (157 aa).

The helical transmembrane segment at 7–29 threads the bilayer; sequence LVSQAIAFSIFIWFTTKFVWPYL.

Belongs to the ATPase B chain family. F-type ATPases have 2 components, F(1) - the catalytic core - and F(0) - the membrane proton channel. F(1) has five subunits: alpha(3), beta(3), gamma(1), delta(1), epsilon(1). F(0) has three main subunits: a(1), b(2) and c(10-14). The alpha and beta chains form an alternating ring which encloses part of the gamma chain. F(1) is attached to F(0) by a central stalk formed by the gamma and epsilon chains, while a peripheral stalk is formed by the delta and b chains.

The protein localises to the cell inner membrane. In terms of biological role, f(1)F(0) ATP synthase produces ATP from ADP in the presence of a proton or sodium gradient. F-type ATPases consist of two structural domains, F(1) containing the extramembraneous catalytic core and F(0) containing the membrane proton channel, linked together by a central stalk and a peripheral stalk. During catalysis, ATP synthesis in the catalytic domain of F(1) is coupled via a rotary mechanism of the central stalk subunits to proton translocation. Functionally, component of the F(0) channel, it forms part of the peripheral stalk, linking F(1) to F(0). This chain is ATP synthase subunit b, found in Nitrosomonas eutropha (strain DSM 101675 / C91 / Nm57).